We begin with the raw amino-acid sequence, 263 residues long: Oxidoreductase tpcG (263 aa).

It belongs to the avfA family. Specifically expressed in conidia.

It functions in the pathway secondary metabolite biosynthesis. Its function is as follows. Oxidoreductase; part of the gene cluster that mediates the biosynthesis of trypacidin, a mycotoxin with antiprotozoal activity and that plays a role in the infection process. The pathway begins with the synthesis of atrochrysone thioester by the polyketide synthase (PKS) tpcC. The atrochrysone carboxyl ACP thioesterase tpcB then breaks the thioester bond and releases the atrochrysone carboxylic acid from tpcC. The decarboxylase tpcK converts atrochrysone carboxylic acid to atrochrysone which is further reduced into emodin anthrone. The next step is performed by the emodin anthrone oxygenase tpcL that catalyzes the oxidation of emodinanthrone to emodin. Emodin O-methyltransferase encoded by tpcA catalyzes methylation of the 8-hydroxy group of emodin to form questin. Ring cleavage of questin by questin oxidase tpcI leads to desmethylsulochrin via several intermediates including questin epoxide. Another methylation step catalyzed by tpcM leads to the formation of sulochrin which is further converted to monomethylsulfochrin by tpcH. Finally, the tpcJ catalyzes the conversion of monomethylsulfochrin to trypacidin. Trypacidin is toxic for human pulmonary and bronchial epithelial cells by initiating the intracellular formation of nitric oxide (NO) and hydrogen peroxide (H(2)O(2)), thus triggering host necrotic cell death. The trypacidin pathway is also able to produce endocrocin via a distinct route from the endocrocin Enc pathway. The protein is Oxidoreductase tpcG of Aspergillus fumigatus (strain ATCC MYA-4609 / CBS 101355 / FGSC A1100 / Af293) (Neosartorya fumigata).